The chain runs to 127 residues: Large ribosomal subunit protein bL12 (127 aa).

The protein belongs to the bacterial ribosomal protein bL12 family. Homodimer. Part of the ribosomal stalk of the 50S ribosomal subunit. Forms a multimeric L10(L12)X complex, where L10 forms an elongated spine to which 2 to 4 L12 dimers bind in a sequential fashion. Binds GTP-bound translation factors.

In terms of biological role, forms part of the ribosomal stalk which helps the ribosome interact with GTP-bound translation factors. Is thus essential for accurate translation. The chain is Large ribosomal subunit protein bL12 from Syntrophotalea carbinolica (strain DSM 2380 / NBRC 103641 / GraBd1) (Pelobacter carbinolicus).